The primary structure comprises 361 residues: Oxidoreductase lepF (361 aa).

Residues 257-277 (MLMLVLQAVLLPVFYVVAMPL) form a helical membrane-spanning segment.

The protein belongs to the NmrA-type oxidoreductase family.

The protein localises to the membrane. Functionally, oxidoreductase; part of the gene cluster 23 that mediates the biosynthesis of a family of 2-pyridones known as leporins. The hybrid PKS-NRPS synthetase lepA and the enoyl reductase lepG are responsible for fusion of phenylalanine with a hexaketide and subsequent release of the stable tetramic acid precursor, pre-leporin C. Because lepA lacks a designated enoylreductase (ER) domain, the required activity is provided the enoyl reductase lepG. It is possible that the dehydrogenase lepF also participates in production of pre-leporin C. Cytochrome P450 monooxygenase lepH is then required for the ring expansion step to yield leporin C. Leporin C is then presumably further oxidized by the N-hydroxylase lepD to form leporin B. LepI may possess a function in biosynthesis upstream of lepA. Leporin B is further oxidized in the presence of ferric ion to give the leporin B trimer-iron chelate, but whether or not this reaction is catalyzed by an enzyme in the pathway or by ferric ion is not determined yet. The protein is Oxidoreductase lepF of Aspergillus flavus (strain ATCC 200026 / FGSC A1120 / IAM 13836 / NRRL 3357 / JCM 12722 / SRRC 167).